A 252-amino-acid chain; its full sequence is Chitooligosaccharide deacetylase (252 aa).

Positions 61 and 125 each coordinate Mg(2+).

This sequence belongs to the YdjC deacetylase family. ChbG subfamily. In terms of assembly, homodimer. It depends on Mg(2+) as a cofactor.

It localises to the cytoplasm. The catalysed reaction is N,N'-diacetylchitobiose + H2O = N-acetyl-beta-D-glucosaminyl-(1-&gt;4)-D-glucosamine + acetate. It carries out the reaction diacetylchitobiose-6'-phosphate + H2O = N'-monoacetylchitobiose-6'-phosphate + acetate. Its pathway is glycan degradation; chitin degradation. Its function is as follows. Involved in the degradation of chitin. ChbG is essential for growth on the acetylated chitooligosaccharides chitobiose and chitotriose but is dispensable for growth on cellobiose and chitosan dimer, the deacetylated form of chitobiose. Deacetylation of chitobiose-6-P and chitotriose-6-P is necessary for both the activation of the chb promoter by the regulatory protein ChbR and the hydrolysis of phosphorylated beta-glucosides by the phospho-beta-glucosidase ChbF. Catalyzes the removal of only one acetyl group from chitobiose-6-P to yield monoacetylchitobiose-6-P, the inducer of ChbR and the substrate of ChbF. The protein is Chitooligosaccharide deacetylase of Escherichia coli O127:H6 (strain E2348/69 / EPEC).